Here is a 123-residue protein sequence, read N- to C-terminus: Putative iron-sulfur cluster insertion protein ErpA (123 aa).

Residues cysteine 51, cysteine 115, and cysteine 117 each contribute to the iron-sulfur cluster site.

The protein belongs to the HesB/IscA family. As to quaternary structure, homodimer. It depends on iron-sulfur cluster as a cofactor.

Its function is as follows. Required for insertion of 4Fe-4S clusters. This is Putative iron-sulfur cluster insertion protein ErpA from Bordetella avium (strain 197N).